We begin with the raw amino-acid sequence, 519 residues long: Fatty acid--[acyl-carrier-protein] ligase ScoC (519 aa).

Residue Thr-167 coordinates Mg(2+). Ile-216 and Thr-312 together coordinate ATP. Glu-313 is a Mg(2+) binding site. 2 residues coordinate ATP: Asp-394 and Lys-411.

The protein belongs to the ATP-dependent AMP-binding enzyme family. It depends on Mg(2+) as a cofactor.

The enzyme catalyses a medium-chain fatty acid + holo-[ACP] + ATP = a medium-chain fatty acyl-[ACP] + AMP + diphosphate. It carries out the reaction a medium-chain fatty acid + ATP + H(+) = a medium-chain fatty acyl-AMP + diphosphate. The catalysed reaction is a medium-chain fatty acyl-AMP + holo-[ACP] = a medium-chain fatty acyl-[ACP] + AMP + H(+). It catalyses the reaction octanoate + holo-[ACP] + ATP = octanoyl-[ACP] + AMP + diphosphate. The enzyme catalyses octanoate + ATP + H(+) = octanoyl-AMP + diphosphate. It carries out the reaction octanoyl-AMP + holo-[ACP] = octanoyl-[ACP] + AMP + H(+). The catalysed reaction is a (2E)-enoyl fatty acid + holo-[ACP] + ATP = a (2E)-enoyl-[ACP] + AMP + diphosphate. It catalyses the reaction a (2E)-enoyl fatty acid + ATP + H(+) = a (2E)-2-fatty-enoyl-AMP + diphosphate. The enzyme catalyses a (2E)-2-fatty-enoyl-AMP + holo-[ACP] = a (2E)-enoyl-[ACP] + AMP + H(+). It carries out the reaction (2E)-2-butenoate + holo-[ACP] + ATP = (2E)-butenoyl-[ACP] + AMP + diphosphate. The catalysed reaction is (2E)-2-butenoate + ATP + H(+) = (2E)-but-2-enoyl-AMP + diphosphate. It catalyses the reaction (2E)-but-2-enoyl-AMP + holo-[ACP] = (2E)-butenoyl-[ACP] + AMP + H(+). The enzyme catalyses a (3R)-3-isocyanyl-fatty acid + holo-[ACP] + ATP = a (3R)-3-isocyanyl-fatty acyl-[ACP] + AMP + diphosphate. It carries out the reaction a (3R)-3-isocyanyl-fatty acid + ATP + H(+) = a (3R)-3-isocyanyl-fatty acyl-AMP + diphosphate. The catalysed reaction is a (3R)-3-isocyanyl-fatty acyl-AMP + holo-[ACP] = a (3R)-3-isocyanyl-fatty acyl-[ACP] + AMP + H(+). It catalyses the reaction (3R)-3-isocyanylbutanoate + holo-[ACP] + ATP = (3R)-3-isocyanylbutanoyl-[ACP] + AMP + diphosphate. The enzyme catalyses (3R)-3-isocyanylbutanoate + ATP + H(+) = (3R)-3-isocyanylbutanoyl-AMP + diphosphate. It carries out the reaction (3R)-3-isocyanylbutanoyl-AMP + holo-[ACP] = (3R)-3-isocyanylbutanoyl-[ACP] + AMP + H(+). Functionally, acyl:acyl-carrier protein ligase involved in the biosynthesis of a unique class of isonitrile lipopeptides (INLPs). Shows a strong preference for fatty acids with a short/medium-chain length (C4-C8) in vitro, and accepts alpha,beta-unsaturated fatty acids such as crotonate, which seems to be a physiological substrate. Acts twice during the INLP pathway, catalyzing the activation of crotonate ((2E)-2-butenoate) as well as (3R)-3-isocyanylbutanoate as acyl-adenylates (acyl-AMP), and then the acyl transfer to the dedicated acyl-carrier protein ScoB. This chain is Fatty acid--[acyl-carrier-protein] ligase ScoC, found in Streptomyces coeruleorubidus.